The chain runs to 266 residues: Glucosamine-6-phosphate deaminase (266 aa).

Catalysis depends on Asp72, which acts as the Proton acceptor; for enolization step. The For ring-opening step role is filled by Asp141. His143 (proton acceptor; for ring-opening step) is an active-site residue. Residue Glu148 is the For ring-opening step of the active site.

It belongs to the glucosamine/galactosamine-6-phosphate isomerase family. NagB subfamily. Homohexamer.

It carries out the reaction alpha-D-glucosamine 6-phosphate + H2O = beta-D-fructose 6-phosphate + NH4(+). The protein operates within amino-sugar metabolism; N-acetylneuraminate degradation; D-fructose 6-phosphate from N-acetylneuraminate: step 5/5. With respect to regulation, allosterically activated by N-acetylglucosamine 6-phosphate (GlcNAc6P). In terms of biological role, catalyzes the reversible isomerization-deamination of glucosamine 6-phosphate (GlcN6P) to form fructose 6-phosphate (Fru6P) and ammonium ion. This is Glucosamine-6-phosphate deaminase from Aeromonas hydrophila subsp. hydrophila (strain ATCC 7966 / DSM 30187 / BCRC 13018 / CCUG 14551 / JCM 1027 / KCTC 2358 / NCIMB 9240 / NCTC 8049).